We begin with the raw amino-acid sequence, 471 residues long: Monocarboxylate transporter 11 (471 aa).

Residues M1–F13 show a composition bias toward basic residues. The segment at M1–G31 is disordered. The Cytoplasmic portion of the chain corresponds to M1–G35. Residues P19 to Q28 show a composition bias toward low complexity. Helical transmembrane passes span G36–L56, A78–L98, P106–S126, L131–L151, V163–A183, L198–V218, A243–V263, G273–A293, L312–V332, G333–A353, L367–L389, and A407–P427. Residues R428–C471 are Cytoplasmic-facing.

It belongs to the major facilitator superfamily. Monocarboxylate porter (TC 2.A.1.13) family. In terms of assembly, interacts with isoform 2 of BSG. Expressed in liver, salivary gland and thyroid.

It localises to the endoplasmic reticulum membrane. The protein resides in the cell membrane. It carries out the reaction pyruvate(out) + H(+)(out) = pyruvate(in) + H(+)(in). Proton-linked monocarboxylate transporter. It catalyzes the transport of pyruvate across the plasma membrane. Probably involved in hepatic lipid metabolism: overexpression results in an increase of triacylglycerol(TAG) levels, small increases in intracellular diacylglycerols and decreases in lysophosphatidylcholine, cholesterol ester and sphingomyelin lipids. The chain is Monocarboxylate transporter 11 (SLC16A11) from Homo sapiens (Human).